We begin with the raw amino-acid sequence, 517 residues long: 6-phosphogluconate dehydrogenase, decarboxylating (517 aa).

Residues 35 to 40 (GLAVMG), 58 to 60 (NRT), 100 to 102 (VKA), and N128 contribute to the NADP(+) site. Residues N128 and 154-156 (SGG) each bind substrate. Residue K208 is the Proton acceptor of the active site. Position 211-212 (211-212 (HN)) interacts with substrate. E215 acts as the Proton donor in catalysis. Residues Y216, K286, R313, R474, and H480 each coordinate substrate.

The protein belongs to the 6-phosphogluconate dehydrogenase family. As to quaternary structure, homodimer.

It carries out the reaction 6-phospho-D-gluconate + NADP(+) = D-ribulose 5-phosphate + CO2 + NADPH. It functions in the pathway carbohydrate degradation; pentose phosphate pathway; D-ribulose 5-phosphate from D-glucose 6-phosphate (oxidative stage): step 3/3. Functionally, catalyzes the oxidative decarboxylation of 6-phosphogluconate to ribulose 5-phosphate and CO(2), with concomitant reduction of NADP to NADPH. The chain is 6-phosphogluconate dehydrogenase, decarboxylating (DOR14) from Candida albicans (Yeast).